The primary structure comprises 267 residues: 5'-nucleotidase SurE (267 aa).

Positions 14, 15, 45, and 100 each coordinate a divalent metal cation.

This sequence belongs to the SurE nucleotidase family. The cofactor is a divalent metal cation.

Its subcellular location is the cytoplasm. The catalysed reaction is a ribonucleoside 5'-phosphate + H2O = a ribonucleoside + phosphate. Its function is as follows. Nucleotidase that shows phosphatase activity on nucleoside 5'-monophosphates. This Methanosarcina acetivorans (strain ATCC 35395 / DSM 2834 / JCM 12185 / C2A) protein is 5'-nucleotidase SurE.